The primary structure comprises 714 residues: Lipase maturation factor 2 (714 aa).

9 consecutive transmembrane segments (helical) span residues 11–31 (LFLAGLAAAYLAAFVSLYLQI), 79–99 (MELLCLLGAVASMGALLCAPL), 103–125 (LLFAVLRVFYLSLYQVGQVFLYF), 159–179 (SVTFWLVRWLLFRLMFASGVV), 221–241 (FSVVATYVIEIAVPLLFFMPI), 257–277 (ILIILTGNYNFFNALTIVLAF), 304–324 (TLLSFLSTLLELATYALLLYW), 358–378 (VTLPLVGLGFLSLSWEILSAL), and 398–418 (AVFATATVGMFAISLVPFTYI). Asparagine 483 carries an N-linked (GlcNAc...) asparagine glycan. The chain crosses the membrane as a helical span at residues 629-649 (PFSPHVVLWSLYVVAATTCLL). Residues 654–669 (RRPRGGAPPTRHKAPK) show a composition bias toward basic residues. Residues 654-714 (RRPRGGAPPT…EGPRGTKRRK (61 aa)) form a disordered region. Residues 683 to 708 (RRKEGREAEERGEGRSRGAADGEGPR) show a composition bias toward basic and acidic residues.

This sequence belongs to the lipase maturation factor family.

It is found in the endoplasmic reticulum membrane. Its function is as follows. Involved in the maturation of specific proteins in the endoplasmic reticulum. May be required for maturation and transport of active lipoprotein lipase (LPL) through the secretory pathway. In Gallus gallus (Chicken), this protein is Lipase maturation factor 2 (LMF2).